The primary structure comprises 387 residues: Putative F-box protein At1g47800 (387 aa).

An F-box domain is found at 8-54 (LQSLDHIPIDVLFEILVKLPAKSVARFLCVSKVWATMIRGEVFIRSF).

The protein is Putative F-box protein At1g47800 of Arabidopsis thaliana (Mouse-ear cress).